Reading from the N-terminus, the 258-residue chain is MAKRLDLTDVNIYYGSFHAVADVSLAILPRSVTAFIGPSGCGKTTVLRTLNRMHEVIPGARVEGAVLLDDQDIYAPGIDPVGVRRAIGMVFQRPNPFPAMSIRNNVVAGLKLQGVRNRKVLDDTAESSLRGANLWDEVKDRLDKPGGGLSGGQQQRLCIARAIAVQPDVLLMDEPCSSLDPISTMAIEDLISELKQQYTIVIVTHNMQQAARVSDQTAFFNLEAVGKPGRLVEIASTEKIFSNPNQKATEDYISGRFG.

Residues 5–247 enclose the ABC transporter domain; sequence LDLTDVNIYY…EKIFSNPNQK (243 aa). 37-44 serves as a coordination point for ATP; it reads GPSGCGKT.

The protein belongs to the ABC transporter superfamily. Phosphate importer (TC 3.A.1.7) family. As to quaternary structure, the complex is composed of two ATP-binding proteins (PstB), two transmembrane proteins (PstC and PstA) and a solute-binding protein (PstS).

It localises to the cell membrane. The enzyme catalyses phosphate(out) + ATP + H2O = ADP + 2 phosphate(in) + H(+). Functionally, part of the ABC transporter complex PstSACB involved in phosphate import. Responsible for energy coupling to the transport system. This Mycobacterium tuberculosis (strain CDC 1551 / Oshkosh) protein is Phosphate import ATP-binding protein PstB 1.